The primary structure comprises 527 residues: Putative ABC transporter peptide-binding protein BMEII0859 (527 aa).

Positions 1-23 (MRLRNFYSALALSAAVFAGPLYA) are cleaved as a signal peptide.

The protein belongs to the bacterial solute-binding protein 5 family. In terms of assembly, the complex is composed of two ATP-binding proteins (BMEII0863 and BMEII0864), two transmembrane proteins (BMEII0860 and BMEII0861) and a solute-binding protein (BMEII0859).

The protein localises to the periplasm. Its function is as follows. Probably part of an ABC transporter complex that could be involved in peptide import. This is Putative ABC transporter peptide-binding protein BMEII0859 from Brucella melitensis biotype 1 (strain ATCC 23456 / CCUG 17765 / NCTC 10094 / 16M).